We begin with the raw amino-acid sequence, 773 residues long: Cellobiose dehydrogenase (773 aa).

An N-terminal signal peptide occupies residues 1-18 (MLGRSLLALLPFVGLAFS). At Q19 the chain carries Pyrrolidone carboxylic acid. The heme domain stretch occupies residues 19–208 (QSASQFTDPT…YQNYLNGDSG (190 aa)). Positions 83 and 181 each coordinate heme. Residues 203-227 (LNGDSGNPTTTSTKPTSTSSSVTTG) form a disordered region. Residues 210–227 (PTTTSTKPTSTSSSVTTG) show a composition bias toward low complexity. The oxidoreductase stretch occupies residues 235–773 (YDYIIVGAGP…AKILALAGGP (539 aa)). 236 to 265 (DYIIVGAGPGGIIAADRLSEAGKKVLLLER) is an FAD binding site. The active-site Proton acceptor is H707.

It in the C-terminal section; belongs to the GMC oxidoreductase family. It depends on FAD as a cofactor. The cofactor is heme.

It localises to the secreted. The enzyme catalyses D-cellobiose + A = D-cellobiono-1,5-lactone + AH2. Degrades both lignin and cellulose. Oxidizes cellobiose to cellobionolactone. The polypeptide is Cellobiose dehydrogenase (CDH-1) (Phanerodontia chrysosporium (White-rot fungus)).